We begin with the raw amino-acid sequence, 268 residues long: Tryptophan synthase alpha chain (268 aa).

Catalysis depends on proton acceptor residues E49 and D60.

It belongs to the TrpA family. As to quaternary structure, tetramer of two alpha and two beta chains.

It carries out the reaction (1S,2R)-1-C-(indol-3-yl)glycerol 3-phosphate + L-serine = D-glyceraldehyde 3-phosphate + L-tryptophan + H2O. The protein operates within amino-acid biosynthesis; L-tryptophan biosynthesis; L-tryptophan from chorismate: step 5/5. The alpha subunit is responsible for the aldol cleavage of indoleglycerol phosphate to indole and glyceraldehyde 3-phosphate. This chain is Tryptophan synthase alpha chain, found in Escherichia coli O17:K52:H18 (strain UMN026 / ExPEC).